The sequence spans 1105 residues: Integrator complex subunit 2 (1105 aa).

Residues 822–842 (FVFCSPYLLMILLRILKGSLA) form a helical membrane-spanning segment.

The protein belongs to the Integrator subunit 2 family. Belongs to the multiprotein complex Integrator, at least composed of IntS1, IntS2, IntS3, IntS4, omd/IntS5, IntS6, defl/IntS7, IntS8, IntS9, IntS10, IntS11, IntS12, asun/IntS13, IntS14 and IntS15. The core complex associates with protein phosphatase 2A subunits mts/PP2A and Pp2A-29B, to form the Integrator-PP2A (INTAC) complex.

It localises to the nucleus membrane. It is found in the nucleus. Its function is as follows. Component of the integrator complex, a multiprotein complex that terminates RNA polymerase II (Pol II) transcription in the promoter-proximal region of genes. The integrator complex provides a quality checkpoint during transcription elongation by driving premature transcription termination of transcripts that are unfavorably configured for transcriptional elongation: the complex terminates transcription by (1) catalyzing dephosphorylation of the C-terminal domain (CTD) of Pol II subunit Polr2A/Rbp1 and Spt5, and (2) degrading the exiting nascent RNA transcript via endonuclease activity. The integrator complex is also involved in the 3'-end processing of the U7 snRNA, and also the spliceosomal snRNAs U1, U2, U4 and U5. This chain is Integrator complex subunit 2, found in Drosophila melanogaster (Fruit fly).